The chain runs to 137 residues: Cellular retinoic acid-binding protein 1 (137 aa).

Positions 21 to 31 (KALGVNAMLRK) match the Nuclear localization signal motif. 132–134 (RIY) lines the all-trans-retinoate pocket.

It belongs to the calycin superfamily. Fatty-acid binding protein (FABP) family.

The protein localises to the cytoplasm. Cytosolic CRABPs may regulate the access of retinoic acid to the nuclear retinoic acid receptors. In Gallus gallus (Chicken), this protein is Cellular retinoic acid-binding protein 1 (CRABP1).